A 1501-amino-acid chain; its full sequence is MAKTSQAEGQPYKGYYNNKSQGQPYHGYYSGFNKSASAQIHHLARSLTQGVQSHYDDTYTTATMHPNGINPISDKTDPTLDPESPSFSSKRWVQNMWKLYQSDSEYYKPGKLGVAYKNLRVYGDAIESDYQTTVSNGVLKYARNIFNKFRKDNDDYSFDILKPMEGLIKPGEVTVVLGRPGAGCSTFLKTIACRTEGFHVADGSVISYDGITQDEIRNHLRGEVVYCAETETHFPNLTVGETLEFAALMKTPQNRPMGVSREEYAKHVVDVVMATYGLSHTKNTKVGNDFIRGISGGERKRLSIAEVTLVQASIQCWDNSTRGLDAATALEFISSLKTSASILNDTPLIAIYQCSQNAYDLFDKVIVMYEGYQIFFGSSQRAAAYFKKMGFVCQDRQTTPDFLTSITSPAERIIKPGYERLVPRTPKEFYRYWRRSPERQALLEEIDEYLDNCENYDQKQKIFEANNAKKAKHTYNKSSYTVSLPMQVRYIMKRYWDRMRGDIIVPLSTVAGNIAMALILSSVFYNLQPNSSSFYYRTSVMYYALLFNAYSSVLEIYNMYEGRAIVQKHREYALYPPMADAIGSIISDFPLKVVCSVLFNLILYFMVNFKREPGAFFFYLLISFCSTLFMSHLFRTIGAFTNSLAEAMTPSSLLLFALSTFSGFAIPVTYMLGWCKWIRWVNPLAYAYEALISNEFHGRVFDCSNIVPSGFGYPKTGNSVVCASIGALPGEFKVDGDLYLKLAFDYSYSNVWRNFGVLMAFIIFLFGTTIFFVQTNKSSISKGETLVFRRKNIRKMRKMEEDEEAYMDGMAPLDFSGSTEISDYSYDYMDRKLLDTSNIFHWRNLTYTVKIKSEERVILNNIDGWVKPGEVTALMGASGAGKTTLLNALSERLTTGVITSGTRMVNGGELDSSFQRSIGYVQQQDLHLETSTVREALKFSARLRQPNSVSIAEKDSYVEKIIDLLEMRTYVDAIVGVPGEGLNVEQRKRLTIAVELVARPKLLVFLDEPTSGLDSQTAWSICKLIRKLANHGQAILCTIHQPSAILLEEFDRLLLLQKGETVYFGEFGANCHTLIEYFERNGASKCPQHANPAEWMLGVIGAAPGTQANQDYFETWRNSPEYRAVQNELHRLEEMPGLASGEKEPDTNQAYAASFWKQYIFVVHRLFQQYWRTPSYIYSKFAMAVLCSLFNGFTYYKSQNSMQGLKNQMLSIFSMFVVLTTLAQQYVPLFVTQRDLYEARERPSKTFSWLAFIAAQITAEIPYQVLAATISFFSWYYPVGLYRNAVYSGAVTHRGVLMWLIMTLMFIYSSTLAQFCISWNQLADYAANWISLLLTISMIFCGVIATKDSMPKFWVFLYRCTPLTYLTSAMMSIGLGDSFVKCAPTEILTFPPQTPGVQKCQDYMGAYISIAGGYLLNPEATDNCKFCIMDKTNQFLDFMNISIHNFGRDTGIFIVFIVFNMAATVFSYWLFRVPKGNREKGSFFDKLPFLNGGGDTNHENV.

Residues 1 to 502 (MAKTSQAEGQ…KRYWDRMRGD (502 aa)) are Cytoplasmic-facing. Residues 58–87 (TYTTATMHPNGINPISDKTDPTLDPESPSF) are disordered. The region spanning 140-395 (KYARNIFNKF…FKKMGFVCQD (256 aa)) is the ABC transporter 1 domain. A helical transmembrane segment spans residues 503–523 (IIVPLSTVAGNIAMALILSSV). Asparagine 530 carries N-linked (GlcNAc...) asparagine glycosylation. The next 5 helical transmembrane spans lie at 540-560 (VMYYALLFNAYSSVLEIYNMY), 589-609 (FPLKVVCSVLFNLILYFMVNF), 614-634 (GAFFFYLLISFCSTLFMSHLF), 653-673 (LLLFALSTFSGFAIPVTYMLG), and 755-775 (FGVLMAFIIFLFGTTIFFVQT). The Cytoplasmic portion of the chain corresponds to 776–1175 (NKSSISKGET…LFQQYWRTPS (400 aa)). The 244-residue stretch at 840–1083 (FHWRNLTYTV…LIEYFERNGA (244 aa)) folds into the ABC transporter 2 domain. Residue 876–883 (GASGAGKT) coordinates ATP. Transmembrane regions (helical) follow at residues 1176 to 1196 (YIYSKFAMAVLCSLFNGFTYY), 1212 to 1232 (IFSMFVVLTTLAQQYVPLFVT), 1261 to 1281 (IPYQVLAATISFFSWYYPVGL), 1297 to 1317 (LMWLIMTLMFIYSSTLAQFCI), 1325 to 1345 (YAANWISLLLTISMIFCGVIA), 1353 to 1375 (FWVFLYRCTPLTYLTSAMMSIGL), and 1451 to 1471 (GIFIVFIVFNMAATVFSYWLF).

This sequence belongs to the ABC transporter superfamily. ABCG family. PDR (TC 3.A.1.205) subfamily.

The protein localises to the membrane. This is Opaque-specific ABC transporter CDR3 (CDR3) from Candida albicans (Yeast).